We begin with the raw amino-acid sequence, 275 residues long: Digeranylgeranylglyceryl phosphate synthase (275 aa).

The next 8 helical transmembrane spans lie at 12–32, 35–55, 88–108, 125–145, 146–166, 200–220, 224–244, and 255–275; these read VHNV…ATTW, TPLF…GYVI, IVLF…PFGF, KLGL…AYYG, GLAS…IFFF, WIIA…PYFL, VIYL…LILH, and SLMK…SLRI.

The protein belongs to the UbiA prenyltransferase family. DGGGP synthase subfamily. Requires Mg(2+) as cofactor.

Its subcellular location is the cell membrane. It carries out the reaction sn-3-O-(geranylgeranyl)glycerol 1-phosphate + (2E,6E,10E)-geranylgeranyl diphosphate = 2,3-bis-O-(geranylgeranyl)-sn-glycerol 1-phosphate + diphosphate. The protein operates within membrane lipid metabolism; glycerophospholipid metabolism. In terms of biological role, prenyltransferase that catalyzes the transfer of the geranylgeranyl moiety of geranylgeranyl diphosphate (GGPP) to the C2 hydroxyl of (S)-3-O-geranylgeranylglyceryl phosphate (GGGP). This reaction is the second ether-bond-formation step in the biosynthesis of archaeal membrane lipids. This chain is Digeranylgeranylglyceryl phosphate synthase, found in Sulfolobus acidocaldarius (strain ATCC 33909 / DSM 639 / JCM 8929 / NBRC 15157 / NCIMB 11770).